The sequence spans 212 residues: Redox-sensing transcriptional repressor Rex (212 aa).

A DNA-binding region (H-T-H motif) is located at residues 17–56; the sequence is LYARSLRYLLEEGVHSVSSQELGERINVTAAQIRKDLSYF. 91–96 lines the NAD(+) pocket; the sequence is GIGLLG.

Belongs to the transcriptional regulatory Rex family. In terms of assembly, homodimer.

Its subcellular location is the cytoplasm. Functionally, modulates transcription in response to changes in cellular NADH/NAD(+) redox state. The chain is Redox-sensing transcriptional repressor Rex from Chloroflexus aurantiacus (strain ATCC 29366 / DSM 635 / J-10-fl).